We begin with the raw amino-acid sequence, 247 residues long: Adenosylcobinamide-GDP ribazoletransferase (247 aa).

5 consecutive transmembrane segments (helical) span residues 1–21 (MLRL…PFSF), 37–57 (LVGL…ALAL), 61–81 (VADL…HLDG), 109–129 (AVGV…LFAV), and 176–196 (VAVA…LPGI).

Belongs to the CobS family. The cofactor is Mg(2+).

Its subcellular location is the cell inner membrane. It catalyses the reaction alpha-ribazole + adenosylcob(III)inamide-GDP = adenosylcob(III)alamin + GMP + H(+). The enzyme catalyses alpha-ribazole 5'-phosphate + adenosylcob(III)inamide-GDP = adenosylcob(III)alamin 5'-phosphate + GMP + H(+). It participates in cofactor biosynthesis; adenosylcobalamin biosynthesis; adenosylcobalamin from cob(II)yrinate a,c-diamide: step 7/7. Functionally, joins adenosylcobinamide-GDP and alpha-ribazole to generate adenosylcobalamin (Ado-cobalamin). Also synthesizes adenosylcobalamin 5'-phosphate from adenosylcobinamide-GDP and alpha-ribazole 5'-phosphate. This Geotalea daltonii (strain DSM 22248 / JCM 15807 / FRC-32) (Geobacter daltonii) protein is Adenosylcobinamide-GDP ribazoletransferase.